A 626-amino-acid chain; its full sequence is Chaperone protein HtpG (626 aa).

The interval Met-1–Arg-341 is a; substrate-binding. Residues Glu-342–Lys-552 form a b region. A c region spans residues Val-553–Lys-626.

It belongs to the heat shock protein 90 family. In terms of assembly, homodimer.

It is found in the cytoplasm. Functionally, molecular chaperone. Has ATPase activity. The sequence is that of Chaperone protein HtpG from Clostridium botulinum (strain 657 / Type Ba4).